The chain runs to 190 residues: Potassium-transporting ATPase KdpC subunit (190 aa).

Residues 10 to 30 traverse the membrane as a helical segment; sequence TFLFLLLITGGVYPLLTTALG.

Belongs to the KdpC family. In terms of assembly, the system is composed of three essential subunits: KdpA, KdpB and KdpC.

It is found in the cell inner membrane. In terms of biological role, part of the high-affinity ATP-driven potassium transport (or Kdp) system, which catalyzes the hydrolysis of ATP coupled with the electrogenic transport of potassium into the cytoplasm. This subunit acts as a catalytic chaperone that increases the ATP-binding affinity of the ATP-hydrolyzing subunit KdpB by the formation of a transient KdpB/KdpC/ATP ternary complex. This chain is Potassium-transporting ATPase KdpC subunit, found in Shigella flexneri serotype 5b (strain 8401).